A 372-amino-acid polypeptide reads, in one-letter code: Secreted beta-glucosidase SIM1 (372 aa).

The first 15 residues, 1–15 (MKYLTLLTVLSTALA), serve as a signal peptide directing secretion. The segment at 51-85 (VTENASSGASSGETAETIQTRSSSDVSSSSDSNPV) is disordered. A compositionally biased stretch (low complexity) spans 52-85 (TENASSGASSGETAETIQTRSSSDVSSSSDSNPV). Asn54 and Asn351 each carry an N-linked (GlcNAc...) asparagine glycan.

Belongs to the SUN family.

It localises to the secreted. It is found in the cell wall. Its function is as follows. Cell surface beta-glucosidase involved in cell wall maintenance and cytokinesis. Plays a role redundant to SUN41. In Candida albicans (strain SC5314 / ATCC MYA-2876) (Yeast), this protein is Secreted beta-glucosidase SIM1 (SIM1).